The primary structure comprises 249 residues: Ubiquinone biosynthesis O-methyltransferase (249 aa).

Positions 1–21 are disordered; it reads MIPEVSNEASQPAAHRQENVD. Arginine 52, glycine 72, aspartate 93, and methionine 137 together coordinate S-adenosyl-L-methionine.

Belongs to the methyltransferase superfamily. UbiG/COQ3 family.

It carries out the reaction a 3-demethylubiquinol + S-adenosyl-L-methionine = a ubiquinol + S-adenosyl-L-homocysteine + H(+). The enzyme catalyses a 3-(all-trans-polyprenyl)benzene-1,2-diol + S-adenosyl-L-methionine = a 2-methoxy-6-(all-trans-polyprenyl)phenol + S-adenosyl-L-homocysteine + H(+). The protein operates within cofactor biosynthesis; ubiquinone biosynthesis. O-methyltransferase that catalyzes the 2 O-methylation steps in the ubiquinone biosynthetic pathway. This Sodalis glossinidius (strain morsitans) protein is Ubiquinone biosynthesis O-methyltransferase.